A 314-amino-acid polypeptide reads, in one-letter code: Solute carrier family 25 member 44 (314 aa).

Solcar repeat units lie at residues 18–100, 107–210, and 220–302; these read KKFY…TRKF, SNTV…YAEQ, and PHIV…LKKL. The next 6 membrane-spanning stretches (helical) occupy residues 20 to 42, 71 to 90, 113 to 133, 185 to 201, 222 to 239, and 278 to 296; these read FYVFGVAMTMMIRVSVYPFTLIR, AGLYRGFLVNTFTLISGQCY, LVAGGSASLVAQSITVPIDVV, GYVASLLTYIPNSAVWW, IVFQAISGPLAAATASIL, and LSARIISATPSTIVIVVGY.

Belongs to the mitochondrial carrier (TC 2.A.29) family. As to expression, highly expressed in brown adipose tissues compared with other metabolic organs.

The protein localises to the mitochondrion membrane. It catalyses the reaction L-valine(in) = L-valine(out). The enzyme catalyses L-leucine(in) = L-leucine(out). Its function is as follows. Mitochondrial solute transporter which transports branched-chain amino acid (BCAA; valine, leucine and isoleucine) into mitochondria in brown adipose tissue (BAT). BAT is involved in BCAA catabolism and actively utilizes BCAA in the mitochondria for thermogenesis. This Mus musculus (Mouse) protein is Solute carrier family 25 member 44.